The following is a 330-amino-acid chain: GMP reductase (330 aa).

The active-site Thioimidate intermediate is the C180. 209–232 (LIADGGIRHNGDIAKSVRFGASMV) serves as a coordination point for NADP(+).

This sequence belongs to the IMPDH/GMPR family. GuaC type 2 subfamily.

It carries out the reaction IMP + NH4(+) + NADP(+) = GMP + NADPH + 2 H(+). Functionally, catalyzes the irreversible NADPH-dependent deamination of GMP to IMP. It functions in the conversion of nucleobase, nucleoside and nucleotide derivatives of G to A nucleotides, and in maintaining the intracellular balance of A and G nucleotides. The polypeptide is GMP reductase (Lactobacillus gasseri (strain ATCC 33323 / DSM 20243 / BCRC 14619 / CIP 102991 / JCM 1131 / KCTC 3163 / NCIMB 11718 / NCTC 13722 / AM63)).